The primary structure comprises 352 residues: tRNA N6-adenosine threonylcarbamoyltransferase (352 aa).

H114, H118, and Y135 together coordinate a divalent metal cation. Residues 135–139 (YVSGG), D167, G182, E186, and N283 each bind substrate. D311 contributes to the a divalent metal cation binding site.

This sequence belongs to the KAE1 / TsaD family. As to quaternary structure, component of the EKC/KEOPS complex composed of at least BUD32, CGI121, GON7, KAE1 and PCC1; the whole complex dimerizes. A divalent metal cation is required as a cofactor.

The protein resides in the cytoplasm. It is found in the nucleus. It catalyses the reaction L-threonylcarbamoyladenylate + adenosine(37) in tRNA = N(6)-L-threonylcarbamoyladenosine(37) in tRNA + AMP + H(+). Its function is as follows. Component of the EKC/KEOPS complex that is required for the formation of a threonylcarbamoyl group on adenosine at position 37 (t(6)A37) in tRNAs that read codons beginning with adenine. The complex is probably involved in the transfer of the threonylcarbamoyl moiety of threonylcarbamoyl-AMP (TC-AMP) to the N6 group of A37. KAE1 likely plays a direct catalytic role in this reaction, but requires other protein(s) of the complex to fulfill this activity. The EKC/KEOPS complex also promotes both telomere uncapping and telomere elongation. The complex is required for efficient recruitment of transcriptional coactivators. The chain is tRNA N6-adenosine threonylcarbamoyltransferase from Phaeosphaeria nodorum (strain SN15 / ATCC MYA-4574 / FGSC 10173) (Glume blotch fungus).